Here is a 328-residue protein sequence, read N- to C-terminus: Opticin (328 aa).

A signal peptide spans 1-19 (MKFLAFLSLLSLVLQKAET). A glycan (N-linked (GlcNAc...) asparagine) is linked at Asn-46. The residue at position 69 (Tyr-69) is a Sulfotyrosine. N-linked (GlcNAc...) asparagine glycosylation is found at Asn-80 and Asn-101. The 38-residue stretch at 112 to 149 (LLNSQSSHGLPTCLVCVCLGSSVYCDDADLENIPPLPQ) folds into the LRRNT domain. LRR repeat units lie at residues 150–171 (MTTYLYARFNHISHIQAGDFKG), 174–195 (KLRRIDLSGNSISSIHNDALRL), 198–219 (ALQDLILPENQLAALPVLPSGI), 244–265 (KLQFLYLANNMLDSIPGPLPLS), 266–286 (LRSLHLQNNMIETMESDTFCD), and 296–316 (QLEDIRLDGNPINLSLFPEAY). Cys-285 and Cys-318 are oxidised to a cystine. N-linked (GlcNAc...) asparagine glycosylation occurs at Asn-308.

It belongs to the small leucine-rich proteoglycan (SLRP) family. SLRP class III subfamily. In terms of assembly, homodimer. O-glycosylated. In terms of processing, sulfated on tyrosine residues. Post-translationally, proteolytically cleaved by MMP1, MMP2, MMP3, MMP7, MMP8, MMP9, ADAMTS4, and ADAMTS5. Proteolytically cleaved by MMP13. In terms of tissue distribution, expressed in cartilage (at protein level). Expressed in the vitreous collagen, inner limiting membrane, lens capsule, trabecular meshwork, anterior surface of the iris, the area adjacent to the nonpigmented ciliary epithelium, and weakly expressed in the retina of the eye (at protein level). Expressed in the nonpigmented ciliary epithelium of the eye.

It localises to the secreted. Its subcellular location is the extracellular space. The protein resides in the extracellular matrix. Functionally, inhibits angiogenesis in the vitreous humor of the eye, and therefore represses neovascularization. Binds collagen fibrils. May be involved in collagen fiber organization via regulation of other members of the small leucine-rich repeat proteoglycan superfamily. The chain is Opticin (Optc) from Mus musculus (Mouse).